A 39-amino-acid chain; its full sequence is Photosystem II reaction center protein Psb30 (39 aa).

A helical transmembrane segment spans residues 12–32 (IFQLTFVGLIMVAGPVVIFLL).

Belongs to the Psb30/Ycf12 family. As to quaternary structure, PSII is composed of 1 copy each of membrane proteins PsbA, PsbB, PsbC, PsbD, PsbE, PsbF, PsbH, PsbI, PsbJ, PsbK, PsbL, PsbM, PsbT, PsbX, PsbY, PsbZ, Psb30/Ycf12, peripheral proteins PsbO, CyanoQ (PsbQ), PsbU, PsbV and a large number of cofactors. It forms dimeric complexes.

Its subcellular location is the cellular thylakoid membrane. Functionally, a core subunit of photosystem II (PSII), probably helps stabilize the reaction center. The protein is Photosystem II reaction center protein Psb30 of Rippkaea orientalis (strain PCC 8801 / RF-1) (Cyanothece sp. (strain PCC 8801)).